Reading from the N-terminus, the 405-residue chain is Magnesium-protoporphyrin IX monomethyl ester [oxidative] cyclase, chloroplastic (405 aa).

A chloroplast-targeting transit peptide spans 1–44 (MAAEMALVKPITPKFINPMRTFSSSSKFSTIKMSATSQSNTTTT). The span at 33–47 (MSATSQSNTTTTATK) shows a compositional bias: low complexity. Positions 33–54 (MSATSQSNTTTTATKPSKKGNK) are disordered.

This sequence belongs to the AcsF family. It depends on Fe cation as a cofactor.

It is found in the plastid. The protein localises to the chloroplast. The enzyme catalyses Mg-protoporphyrin IX 13-monomethyl ester + 3 NADPH + 3 O2 + 2 H(+) = 3,8-divinyl protochlorophyllide a + 3 NADP(+) + 5 H2O. It participates in porphyrin-containing compound metabolism; chlorophyll biosynthesis. Catalyzes the formation of the isocyclic ring in chlorophyll biosynthesis. Mediates the cyclase reaction, which results in the formation of divinylprotochlorophyllide (Pchlide) characteristic of all chlorophylls from magnesium-protoporphyrin IX 13-monomethyl ester (MgPMME). The sequence is that of Magnesium-protoporphyrin IX monomethyl ester [oxidative] cyclase, chloroplastic (CRD1) from Euphorbia esula (Leafy spurge).